The following is a 232-amino-acid chain: MQKNAAHTYAISSLLVLSLTGCAWIPSTPLVQGATSAQPVPGPTPVANGSIFQSAQPINYGYQPLFEDRRPRNIGDTLTIVLQENVSASKSSSANASRDGKTNFGFDTVPRYLQGLFGNARADVEASGGNTFNGKGGANASNTFSGTLTVTVDQVLVNGNLHVVGEKQIAINQGTEFIRFSGVVNPRTISGSNTVPSTQVADARIEYVGNGYINEAQNMGWLQRFFLNLSPM.

A signal peptide spans 1–21 (MQKNAAHTYAISSLLVLSLTG). Cysteine 22 carries the N-palmitoyl cysteine lipid modification. Cysteine 22 carries S-diacylglycerol cysteine lipidation.

This sequence belongs to the FlgH family. As to quaternary structure, the basal body constitutes a major portion of the flagellar organelle and consists of four rings (L,P,S, and M) mounted on a central rod.

The protein localises to the cell outer membrane. The protein resides in the bacterial flagellum basal body. In terms of biological role, assembles around the rod to form the L-ring and probably protects the motor/basal body from shearing forces during rotation. The chain is Flagellar L-ring protein (flgH) from Shigella flexneri.